We begin with the raw amino-acid sequence, 510 residues long: Bifunctional purine biosynthesis protein PurH (510 aa).

Residues 1–142 (MRALLSVSDK…KNYKDVMVLC (142 aa)) form the MGS-like domain.

Belongs to the PurH family.

The catalysed reaction is (6R)-10-formyltetrahydrofolate + 5-amino-1-(5-phospho-beta-D-ribosyl)imidazole-4-carboxamide = 5-formamido-1-(5-phospho-D-ribosyl)imidazole-4-carboxamide + (6S)-5,6,7,8-tetrahydrofolate. The enzyme catalyses IMP + H2O = 5-formamido-1-(5-phospho-D-ribosyl)imidazole-4-carboxamide. Its pathway is purine metabolism; IMP biosynthesis via de novo pathway; 5-formamido-1-(5-phospho-D-ribosyl)imidazole-4-carboxamide from 5-amino-1-(5-phospho-D-ribosyl)imidazole-4-carboxamide (10-formyl THF route): step 1/1. The protein operates within purine metabolism; IMP biosynthesis via de novo pathway; IMP from 5-formamido-1-(5-phospho-D-ribosyl)imidazole-4-carboxamide: step 1/1. This is Bifunctional purine biosynthesis protein PurH from Campylobacter jejuni (strain RM1221).